We begin with the raw amino-acid sequence, 479 residues long: Siroheme synthase (479 aa).

Positions 1 to 202 (MNYLPIFLDL…GRDSEAEAQL (202 aa)) are precorrin-2 dehydrogenase /sirohydrochlorin ferrochelatase. NAD(+) contacts are provided by residues 22-23 (ET) and 43-44 (PA). Ser128 bears the Phosphoserine mark. The tract at residues 217 to 479 (GEVYLVGAGP…TPLEAPDHLA (263 aa)) is uroporphyrinogen-III C-methyltransferase. Pro226 contacts S-adenosyl-L-methionine. Asp249 serves as the catalytic Proton acceptor. The Proton donor role is filled by Lys271. S-adenosyl-L-methionine-binding positions include 302 to 304 (GGD), Ile307, 332 to 333 (TA), Met384, and Gly413.

In the N-terminal section; belongs to the precorrin-2 dehydrogenase / sirohydrochlorin ferrochelatase family. It in the C-terminal section; belongs to the precorrin methyltransferase family.

The enzyme catalyses uroporphyrinogen III + 2 S-adenosyl-L-methionine = precorrin-2 + 2 S-adenosyl-L-homocysteine + H(+). It catalyses the reaction precorrin-2 + NAD(+) = sirohydrochlorin + NADH + 2 H(+). The catalysed reaction is siroheme + 2 H(+) = sirohydrochlorin + Fe(2+). Its pathway is cofactor biosynthesis; adenosylcobalamin biosynthesis; precorrin-2 from uroporphyrinogen III: step 1/1. It participates in cofactor biosynthesis; adenosylcobalamin biosynthesis; sirohydrochlorin from precorrin-2: step 1/1. It functions in the pathway porphyrin-containing compound metabolism; siroheme biosynthesis; precorrin-2 from uroporphyrinogen III: step 1/1. The protein operates within porphyrin-containing compound metabolism; siroheme biosynthesis; siroheme from sirohydrochlorin: step 1/1. Its pathway is porphyrin-containing compound metabolism; siroheme biosynthesis; sirohydrochlorin from precorrin-2: step 1/1. Functionally, multifunctional enzyme that catalyzes the SAM-dependent methylations of uroporphyrinogen III at position C-2 and C-7 to form precorrin-2 via precorrin-1. Then it catalyzes the NAD-dependent ring dehydrogenation of precorrin-2 to yield sirohydrochlorin. Finally, it catalyzes the ferrochelation of sirohydrochlorin to yield siroheme. The protein is Siroheme synthase of Thiobacillus denitrificans (strain ATCC 25259 / T1).